The sequence spans 76 residues: uncharacterized protein (76 aa).

One can recognise an HTH cro/C1-type domain in the interval 6 to 60; it reads LKKNRLEKGFTQEEVAKAAQIGRAYYTMIENGTRKPSVIVSKKIGEKLGFDWTIF. Residues 17–36 constitute a DNA-binding region (H-T-H motif); it reads QEEVAKAAQIGRAYYTMIEN.

This is an uncharacterized protein from Bacillus subtilis (strain 168).